Reading from the N-terminus, the 119-residue chain is Large ribosomal subunit protein bL20 (119 aa).

Belongs to the bacterial ribosomal protein bL20 family.

Binds directly to 23S ribosomal RNA and is necessary for the in vitro assembly process of the 50S ribosomal subunit. It is not involved in the protein synthesizing functions of that subunit. The polypeptide is Large ribosomal subunit protein bL20 (Neisseria gonorrhoeae (strain ATCC 700825 / FA 1090)).